We begin with the raw amino-acid sequence, 678 residues long: UvrABC system protein B (678 aa).

The Helicase ATP-binding domain occupies 26 to 185; that stretch reads EGLEDGEAFQ…LTTMQYTRND (160 aa). 39-46 contacts ATP; it reads GVTGSGKT. The Beta-hairpin signature appears at 92-115; sequence YYDYYQPEAYVPASDTYIAKDSSV. One can recognise a Helicase C-terminal domain in the interval 430 to 596; it reads QVDDLLGEIR…KLNKKITDIL (167 aa). Positions 597 to 630 are disordered; it reads EDSPYAPKPGASAAKLKAAEADGEYSPQEMQRMT. A UVR domain is found at 635–670; the sequence is ASEIKRMEKQMYQAAKDLDFELAAKLRDDLKRLKSS.

This sequence belongs to the UvrB family. In terms of assembly, forms a heterotetramer with UvrA during the search for lesions. Interacts with UvrC in an incision complex.

The protein localises to the cytoplasm. In terms of biological role, the UvrABC repair system catalyzes the recognition and processing of DNA lesions. A damage recognition complex composed of 2 UvrA and 2 UvrB subunits scans DNA for abnormalities. Upon binding of the UvrA(2)B(2) complex to a putative damaged site, the DNA wraps around one UvrB monomer. DNA wrap is dependent on ATP binding by UvrB and probably causes local melting of the DNA helix, facilitating insertion of UvrB beta-hairpin between the DNA strands. Then UvrB probes one DNA strand for the presence of a lesion. If a lesion is found the UvrA subunits dissociate and the UvrB-DNA preincision complex is formed. This complex is subsequently bound by UvrC and the second UvrB is released. If no lesion is found, the DNA wraps around the other UvrB subunit that will check the other stand for damage. This Hydrogenovibrio crunogenus (strain DSM 25203 / XCL-2) (Thiomicrospira crunogena) protein is UvrABC system protein B.